The following is a 182-amino-acid chain: Probable chorismate pyruvate-lyase (182 aa).

Residues Arg81, Leu119, and Glu171 each contribute to the substrate site.

The protein belongs to the UbiC family.

Its subcellular location is the cytoplasm. It carries out the reaction chorismate = 4-hydroxybenzoate + pyruvate. It participates in cofactor biosynthesis; ubiquinone biosynthesis. Functionally, removes the pyruvyl group from chorismate, with concomitant aromatization of the ring, to provide 4-hydroxybenzoate (4HB) for the ubiquinone pathway. The sequence is that of Probable chorismate pyruvate-lyase from Pseudomonas putida (Arthrobacter siderocapsulatus).